The chain runs to 338 residues: Heat-inducible transcription repressor HrcA (338 aa).

It belongs to the HrcA family.

In terms of biological role, negative regulator of class I heat shock genes (grpE-dnaK-dnaJ and groELS operons). Prevents heat-shock induction of these operons. This chain is Heat-inducible transcription repressor HrcA, found in Bacillus anthracis (strain A0248).